A 351-amino-acid polypeptide reads, in one-letter code: Polyribonucleotide 5'-hydroxyl-kinase TK1956 (351 aa).

G34–S41 provides a ligand contact to ATP.

Requires a divalent metal cation as cofactor.

The enzyme catalyses a 5'-end dephospho-2'-deoxyribonucleoside-DNA + ATP = a 5'-end 5'-phospho-2'-deoxyribonucleoside-DNA + ADP + H(+). It catalyses the reaction a 5'-end dephospho-ribonucleoside-RNA + ATP = a 5'-end 5'-phospho-ribonucleoside-RNA + ADP + H(+). Its function is as follows. Polynucleotide kinase that can phosphorylate the 5'-hydroxyl groups of both single-stranded RNA (ssRNA) and single-stranded DNA (ssDNA). Exhibits a strong preference for ssRNA. This Thermococcus kodakarensis (strain ATCC BAA-918 / JCM 12380 / KOD1) (Pyrococcus kodakaraensis (strain KOD1)) protein is Polyribonucleotide 5'-hydroxyl-kinase TK1956.